The chain runs to 634 residues: 1-deoxy-D-xylulose-5-phosphate synthase (634 aa).

Thiamine diphosphate is bound by residues H73 and 114–116; that span reads GHS. D145 is a binding site for Mg(2+). Thiamine diphosphate-binding positions include 146-147, N174, Y285, and E365; that span reads GA. Mg(2+) is bound at residue N174.

The protein belongs to the transketolase family. DXPS subfamily. Homodimer. The cofactor is Mg(2+). Thiamine diphosphate is required as a cofactor.

It carries out the reaction D-glyceraldehyde 3-phosphate + pyruvate + H(+) = 1-deoxy-D-xylulose 5-phosphate + CO2. It functions in the pathway metabolic intermediate biosynthesis; 1-deoxy-D-xylulose 5-phosphate biosynthesis; 1-deoxy-D-xylulose 5-phosphate from D-glyceraldehyde 3-phosphate and pyruvate: step 1/1. Its function is as follows. Catalyzes the acyloin condensation reaction between C atoms 2 and 3 of pyruvate and glyceraldehyde 3-phosphate to yield 1-deoxy-D-xylulose-5-phosphate (DXP). This is 1-deoxy-D-xylulose-5-phosphate synthase from Desulforudis audaxviator (strain MP104C).